The primary structure comprises 52 residues: uncharacterized protein (52 aa).

Residues 21–40 (VAMNSYVELLFLSVPLIHIF) traverse the membrane as a helical segment.

Its subcellular location is the cell membrane. This is an uncharacterized protein from Bacillus subtilis (strain 168).